Consider the following 133-residue polypeptide: Ribonuclease P protein component (133 aa).

The protein belongs to the RnpA family. In terms of assembly, consists of a catalytic RNA component (M1 or rnpB) and a protein subunit.

It carries out the reaction Endonucleolytic cleavage of RNA, removing 5'-extranucleotides from tRNA precursor.. In terms of biological role, RNaseP catalyzes the removal of the 5'-leader sequence from pre-tRNA to produce the mature 5'-terminus. It can also cleave other RNA substrates such as 4.5S RNA. The protein component plays an auxiliary but essential role in vivo by binding to the 5'-leader sequence and broadening the substrate specificity of the ribozyme. The sequence is that of Ribonuclease P protein component from Synechococcus sp. (strain JA-2-3B'a(2-13)) (Cyanobacteria bacterium Yellowstone B-Prime).